A 984-amino-acid chain; its full sequence is Hyaluronate lyase (984 aa).

Polar residues-rich tracts occupy residues 1–12, 19–32, and 54–66; these read MKQVVDNQTQNK, DFNQ…SWSH, and IQRT…SLSS. Disordered stretches follow at residues 1 to 32 and 49 to 68; these read MKQV…SWSH and DKSP…SSDK. Positions 1–40 are cleaved as a signal peptide; that stretch reads MKQVVDNQTQNKELVKNGDFNQTNPVSGSWSHTSAREWSA. Active-site residues include N429, H479, and Y488. Over residues 701 to 726 the composition is skewed to basic and acidic residues; it reads TEKDAKREDTTKEFMSKHSKDAKEKT. A disordered region spans residues 701 to 728; the sequence is TEKDAKREDTTKEFMSKHSKDAKEKTGQ.

Belongs to the polysaccharide lyase 8 family.

The protein localises to the secreted. It catalyses the reaction [hyaluronan](n) = n 3-(4-deoxy-beta-D-gluc-4-enuronosyl)-N-acetyl-D-glucosamine + H2O. In Streptococcus agalactiae serotype III (strain NEM316), this protein is Hyaluronate lyase.